The sequence spans 259 residues: Polycomb group RING finger protein 1 (259 aa).

Residues 45–84 (CYLCAGYFIDATTITECLHTFCKSCIVKYLQTSKYCPLCN) form an RING-type zinc finger.

In terms of assembly, component of a PRC1-like complex.

Its subcellular location is the nucleus. Functionally, component of a Polycomb group (PcG) multiprotein PRC1-like complex, a complex class required to maintain the transcriptionally repressive state of many genes, including Hox genes, throughout development. PcG PRC1 complex acts via chromatin remodeling and modification of histones; it mediates monoubiquitination of histone H2A 'Lys-119', rendering chromatin heritably changed in its expressibility. In Xenopus laevis (African clawed frog), this protein is Polycomb group RING finger protein 1 (pcgf1).